The following is a 283-amino-acid chain: Acetyl-coenzyme A carboxylase carboxyl transferase subunit beta (283 aa).

The CoA carboxyltransferase N-terminal domain occupies 29–283; it reads LWISCPKCQQ…VKIHSMKGAF (255 aa). Positions 33, 36, 51, and 54 each coordinate Zn(2+). A C4-type zinc finger spans residues 33–54; sequence CPKCQQSIYHKDLGKYKTCPNC.

Belongs to the AccD/PCCB family. Acetyl-CoA carboxylase is a heterohexamer composed of biotin carboxyl carrier protein (AccB), biotin carboxylase (AccC) and two subunits each of ACCase subunit alpha (AccA) and ACCase subunit beta (AccD). Zn(2+) is required as a cofactor.

It is found in the cytoplasm. The catalysed reaction is N(6)-carboxybiotinyl-L-lysyl-[protein] + acetyl-CoA = N(6)-biotinyl-L-lysyl-[protein] + malonyl-CoA. It functions in the pathway lipid metabolism; malonyl-CoA biosynthesis; malonyl-CoA from acetyl-CoA: step 1/1. Functionally, component of the acetyl coenzyme A carboxylase (ACC) complex. Biotin carboxylase (BC) catalyzes the carboxylation of biotin on its carrier protein (BCCP) and then the CO(2) group is transferred by the transcarboxylase to acetyl-CoA to form malonyl-CoA. This is Acetyl-coenzyme A carboxylase carboxyl transferase subunit beta from Ligilactobacillus salivarius (strain UCC118) (Lactobacillus salivarius).